The sequence spans 513 residues: Histidine ammonia-lyase (513 aa).

Positions 146-148 form a cross-link, 5-imidazolinone (Ala-Gly); that stretch reads ASG. Ser-147 bears the 2,3-didehydroalanine (Ser) mark.

It belongs to the PAL/histidase family. Contains an active site 4-methylidene-imidazol-5-one (MIO), which is formed autocatalytically by cyclization and dehydration of residues Ala-Ser-Gly.

Its subcellular location is the cytoplasm. It catalyses the reaction L-histidine = trans-urocanate + NH4(+). It participates in amino-acid degradation; L-histidine degradation into L-glutamate; N-formimidoyl-L-glutamate from L-histidine: step 1/3. This Shewanella oneidensis (strain ATCC 700550 / JCM 31522 / CIP 106686 / LMG 19005 / NCIMB 14063 / MR-1) protein is Histidine ammonia-lyase.